The chain runs to 116 residues: Flagellar transcriptional regulator FlhD (116 aa).

This sequence belongs to the FlhD family. As to quaternary structure, homodimer; disulfide-linked. Forms a heterohexamer composed of two FlhC and four FlhD subunits. Each FlhC binds a FlhD dimer, forming a heterotrimer, and a hexamer assembles by dimerization of two heterotrimers.

The protein resides in the cytoplasm. Functionally, functions in complex with FlhC as a master transcriptional regulator that regulates transcription of several flagellar and non-flagellar operons by binding to their promoter region. Activates expression of class 2 flagellar genes, including fliA, which is a flagellum-specific sigma factor that turns on the class 3 genes. Also regulates genes whose products function in a variety of physiological pathways. The chain is Flagellar transcriptional regulator FlhD from Xenorhabdus nematophila (Achromobacter nematophilus).